The following is a 95-amino-acid chain: Cell division protein FtsB (95 aa).

Residues 1–3 (MRW) are Cytoplasmic-facing. A helical membrane pass occupies residues 4–21 (VLAGLTALLLWLQGLLWF). The Periplasmic segment spans residues 22-95 (GEGGLNDVRG…QIIEREDDAR (74 aa)). Residues 26–76 (LNDVRGLSRSVEAQREEVDRLRQRNQALEAEVNDLKTGLEALEERARSELG) are a coiled coil.

It belongs to the FtsB family. Part of a complex composed of FtsB, FtsL and FtsQ.

Its subcellular location is the cell inner membrane. Its function is as follows. Essential cell division protein. May link together the upstream cell division proteins, which are predominantly cytoplasmic, with the downstream cell division proteins, which are predominantly periplasmic. The protein is Cell division protein FtsB of Alkalilimnicola ehrlichii (strain ATCC BAA-1101 / DSM 17681 / MLHE-1).